Here is a 579-residue protein sequence, read N- to C-terminus: Phosphatidylinositol/phosphatidylcholine transfer protein SFH9 (579 aa).

A CRAL-TRIO domain is found at 145 to 319; that stretch reads EYEEVQQYYP…FLGGNCKCAH (175 aa). Residues 372 to 419 form a disordered region; that stretch reads DMSSPDGGHVRERESHPEHDKRAQLSNQAEAVGVGRMEQSDSTSPLPN. Over residues 379–394 the composition is skewed to basic and acidic residues; the sequence is GHVRERESHPEHDKRA. The stretch at 512–539 forms a coiled coil; that stretch reads QEKEDILRDSLDRIKSIEQDLQKTKKAL.

Belongs to the SFH family.

The protein resides in the golgi apparatus membrane. It is found in the cell membrane. Functionally, required for transport of secretory proteins from the Golgi complex. Catalyzes the transfer of phosphatidylinositol and phosphatidylcholine between membranes in vitro. The protein is Phosphatidylinositol/phosphatidylcholine transfer protein SFH9 (SFH9) of Arabidopsis thaliana (Mouse-ear cress).